The sequence spans 371 residues: tRNA-specific 2-thiouridylase MnmA (371 aa).

Residues 7 to 14 and methionine 33 contribute to the ATP site; that span reads GLSGGVDS. The segment at 103 to 105 is interaction with target base in tRNA; it reads NPD. The Nucleophile role is filled by cysteine 108. A disulfide bridge connects residues cysteine 108 and cysteine 201. Glycine 133 provides a ligand contact to ATP. The segment at 151 to 153 is interaction with tRNA; sequence KDQ. Residue cysteine 201 is the Cysteine persulfide intermediate of the active site. Residues 308-309 form an interaction with tRNA region; sequence RY.

Belongs to the MnmA/TRMU family.

The protein resides in the cytoplasm. It catalyses the reaction S-sulfanyl-L-cysteinyl-[protein] + uridine(34) in tRNA + AH2 + ATP = 2-thiouridine(34) in tRNA + L-cysteinyl-[protein] + A + AMP + diphosphate + H(+). Functionally, catalyzes the 2-thiolation of uridine at the wobble position (U34) of tRNA, leading to the formation of s(2)U34. In Mycoplasmopsis pulmonis (strain UAB CTIP) (Mycoplasma pulmonis), this protein is tRNA-specific 2-thiouridylase MnmA.